The sequence spans 52 residues: Protein PROPEP890 (52 aa).

Positions 27–52 (PQADLPQTPNSQVRIVSRDLPRGGNY) are disordered. Residues 31-40 (LPQTPNSQVR) show a composition bias toward polar residues. Basic and acidic residues predominate over residues 42 to 52 (VSRDLPRGGNY).

Expressed in roots. Barely detected in flowers.

Functionally, produces a rapid alkalinization of the cellular media and the induction of defense-related genes, including chitinase 1b, chalcone synthase and CYP93A1. Not active in tobacco or Arabidopsis. The receptor for GmPep890 is probably different from the receptor for GmSubPep. This chain is Protein PROPEP890 (PROPEP890), found in Glycine max (Soybean).